Consider the following 230-residue polypeptide: Membrane protein (230 aa).

The Virion surface portion of the chain corresponds to 1 to 24; it reads MSSPTTPVPVISWTADEAIKFLKE. Residues 25–45 form a helical membrane-spanning segment; the sequence is WNFSLGIIVLFITIILQFGYT. Residues 46–55 lie on the Intravirion side of the membrane; sequence SRSMFVYVIK. A helical transmembrane segment spans residues 56–76; it reads MVILWLMWPLTIILTIFNCVY. Topologically, residues 77–84 are virion surface; it reads ALNNVYLG. Residues 85–105 traverse the membrane as a helical segment; that stretch reads FSIVFTIVAIIMWVVYFVNSI. At 106 to 228 the chain is on the intravirion side; sequence RLFIRTGSWW…SGMDTALLRN (123 aa).

Belongs to the betacoronaviruses M protein family. Homomultimer. Interacts with envelope E protein in the budding compartment of the host cell, which is located between endoplasmic reticulum and the Golgi complex. Forms a complex with HE and S proteins. Interacts with nucleocapsid N protein. This interaction probably participates in RNA packaging into the virus.

It localises to the virion membrane. Its subcellular location is the host Golgi apparatus membrane. In terms of biological role, component of the viral envelope that plays a central role in virus morphogenesis and assembly via its interactions with other viral proteins. In Porcine hemagglutinating encephalomyelitis virus (strain 67N) (HEV-67N), this protein is Membrane protein.